Reading from the N-terminus, the 204-residue chain is Holliday junction branch migration complex subunit RuvA (204 aa).

The domain I stretch occupies residues 1 to 64 (MIAQIRGKLI…QDSILLVGFC (64 aa)). The segment at 65–143 (TENEKQLFKL…GWTSKEQITF (79 aa)) is domain II. The flexible linker stretch occupies residues 144–154 (INNKKDAIDQS). The tract at residues 154–204 (SVMEEDAISALINLGYKSQAAKDAIDRVISEGGENKSLDVILKKALKVLAM) is domain III.

The protein belongs to the RuvA family. Homotetramer. Forms an RuvA(8)-RuvB(12)-Holliday junction (HJ) complex. HJ DNA is sandwiched between 2 RuvA tetramers; dsDNA enters through RuvA and exits via RuvB. An RuvB hexamer assembles on each DNA strand where it exits the tetramer. Each RuvB hexamer is contacted by two RuvA subunits (via domain III) on 2 adjacent RuvB subunits; this complex drives branch migration. In the full resolvosome a probable DNA-RuvA(4)-RuvB(12)-RuvC(2) complex forms which resolves the HJ.

The protein localises to the cytoplasm. In terms of biological role, the RuvA-RuvB-RuvC complex processes Holliday junction (HJ) DNA during genetic recombination and DNA repair, while the RuvA-RuvB complex plays an important role in the rescue of blocked DNA replication forks via replication fork reversal (RFR). RuvA specifically binds to HJ cruciform DNA, conferring on it an open structure. The RuvB hexamer acts as an ATP-dependent pump, pulling dsDNA into and through the RuvAB complex. HJ branch migration allows RuvC to scan DNA until it finds its consensus sequence, where it cleaves and resolves the cruciform DNA. This is Holliday junction branch migration complex subunit RuvA from Syntrophus aciditrophicus (strain SB).